A 122-amino-acid chain; its full sequence is FMN-binding protein (122 aa).

In terms of assembly, monomer and homodimer. It depends on FMN as a cofactor.

It localises to the cytoplasm. Its function is as follows. Functions as a redox protein with a potential of -325 mV. The sequence is that of FMN-binding protein from Nitratidesulfovibrio vulgaris (strain DSM 19637 / Miyazaki F) (Desulfovibrio vulgaris).